We begin with the raw amino-acid sequence, 1225 residues long: NHS-like protein 2 (1225 aa).

Disordered stretches follow at residues 161 to 180 (TFRSSDEATKPTPNPRPQSA), 193 to 213 (QLSEDETTTQGVRAPEASLSL), 291 to 371 (NFSQ…ESMG), 466 to 510 (HMPE…TTDV), 543 to 632 (LSAQ…PEST), 670 to 766 (QGSS…KFPK), 812 to 1009 (KTNP…KKPS), 1042 to 1093 (DTKC…DKTA), and 1128 to 1203 (KEPG…KTTN). Composition is skewed to polar residues over residues 291–315 (NFSQRDQGHSNSPAGSVAHSTTSDI) and 339–350 (SLTSPVLRTPSS). Serine 500 is subject to Phosphoserine. A compositionally biased stretch (basic residues) spans 552-568 (RRQRSKSISLRKAKKKP). A Phosphoserine modification is found at serine 576. Residues 675 to 688 (SLASPSTSRATTPS) are compositionally biased toward low complexity. Serine 691 carries the post-translational modification Phosphoserine. Composition is skewed to polar residues over residues 710 to 730 (SPSSGYSSQSETPTPTVSMSL) and 812 to 827 (KTNPNQPIMPMVTQSD). The segment covering 841 to 851 (PEDDIESPEYA) has biased composition (acidic residues). Positions 852–867 (EEPRAEEVFTLPERKT) are enriched in basic and acidic residues. 2 stretches are compositionally biased toward polar residues: residues 939–968 (GESTAPSSLVFTPFASSSDAFFSGTQQPPQ) and 1054–1065 (SLGQRVTSTPQA). At serine 1054 the chain carries Phosphoserine. Residues 1082–1093 (TEEKSLISDKTA) are compositionally biased toward basic and acidic residues. Residues 1138–1155 (RTSSHSPIKNTAESPISE) show a composition bias toward polar residues. A compositionally biased stretch (low complexity) spans 1156–1166 (STATAGSGSSA).

The protein belongs to the NHS family.

The chain is NHS-like protein 2 from Homo sapiens (Human).